The following is a 310-amino-acid chain: MASSSSGGAGGAGGASGAPEVKIHNVYMSNVEEEFARIRGFVEDYPYVAMDTEFPGVVATPLGTFRSKEDFNYQQVFCNVNMLKLIQVGFAMVNDKGELPPTGDVWQFNFNFSFAEDMFSHESVEMLRQAGIDFTLLQNNGIPTAVFGELLTTSGLITDPRITWLTFSSGYDFGYLLKSITLGDLPKEESTFFMCHKTLFPTSFDIKILLRTPNCASAKLKGGLQEVADQLDVKRQGVRHQAGSDALLTAATFFKIKKQFFGDNWNQIAPLICGHMFGLGSSLSLFHSSGSTSRLGDETPQGLIGVPQQA.

The a divalent metal cation site is built by Asp-51, Glu-53, Asp-172, and Asp-245.

It belongs to the CAF1 family. In terms of assembly, component of the CCR4-NOT complex at least composed of ccf-1, ccr-4 and let-711, which is required for germ cell development in hermaphrodites. Within the complex interacts with let-711. In terms of tissue distribution, highly expressed in the germline. In particular, highly expressed in germ cells that enter meiosis and progress through the pachytene stage.

The protein resides in the nucleus. The protein localises to the cytoplasm. The enzyme catalyses Exonucleolytic cleavage of poly(A) to 5'-AMP.. In terms of biological role, catalytic component of the CCR4-NOT complex which is one of the major cellular mRNA deadenylases and is linked to various cellular processes including bulk mRNA degradation, miRNA-mediated repression, translational repression during translational initiation and general transcription regulation. Within the complex, plays a role in miRNA-mediated deadenylation in embryos. Within the complex promotes germ cell development and fertility in hermaphrodites. Additional complex functions may be a consequence of its influence on mRNA expression. In Caenorhabditis elegans, this protein is CCR4-NOT transcription complex subunit 7.